The chain runs to 294 residues: MTASTLPRSDVEFTTLDGLTLRGWLFPASQRGPALIMSPGFNMPKDAILPDIAKWFQEHGITCLLYDPRGIGASDGEPRNDIDARQQAEHLHDAVTWFKENPLVNEKQIALWGLCFGGNVTLAAAAFDKRVAAAIAVAPLIDSTGNPERRQPILELAMHDRASRLDGEEPMYLPYVNEDGSIPNGLQLAAEMMPALERLGIPVENRISVQTYYKSLSWNILNVVQYISPTPAMMVTPELDVSCPTEDQLNCFEHMKEPKELDILKGKGHLDWVFGDVESILNRQLDFLKRHMAF.

Residues Cys-115, Asp-240, and His-269 contribute to the active site.

Belongs to the polyketide transferase af380 family. As to quaternary structure, homodimer.

It participates in secondary metabolite biosynthesis. Its function is as follows. Polyketide transferase; part of the gene cluster that mediates the biosynthesis of gregatin A, a fungal polyketide featuring an alkylated furanone core. The PKS grgA synthesizes C11 and C4 polyketide chains in the presence and absence of the trans-enoyl reductase grgB, respectively. The polyketide transferase grgF is then responsible for the fusion of the two carbon chains to produce the furanone skeleton of gregatin A. GrgF first undergoes a conformational change to an open form, and the active site Cys-115 is acylated by the C11 chain. After the elimination of the phosphopantetheinyl chain, the second polyketide chain of four carbons long is delivered adjacent to the enzyme-bound C11 chain. The catalytic histidine, His-269, deprotonates a proton from C-2 of the long chain, and the resultant carbanion attacks the C-1 carbonyl of the crotonyl group to perform Claisen condensation, by which the phosphopantetheinyl chain is released. Eventually, hydrolysis of the thioester linkage probably by a His-269-activated water molecule completes the reaction to afford the grgF final product. Next, the cytochrome P450 monooxygenase grgG accepts the unstable grgF final product as substrate and performs the oxidative cyclization to furnish the gregatin scaffold and leads to the formation of desmethylgregatin A. Finally, the O-methyltransferase grgD methylates the carboxyl group of desmethylgregatin A to provide gregatin A. In Penicillium sp, this protein is Polyketide transferase grgF.